The sequence spans 152 residues: Psoriasis susceptibility 1 candidate gene 1 protein homolog (152 aa).

Polar residues predominate over residues 1–31 (MTCTDQKSHSQRALGTQTPALQGPQLLNTDP). Disordered stretches follow at residues 1–39 (MTCT…TRPP) and 132–152 (APTL…SSLI).

The sequence is that of Psoriasis susceptibility 1 candidate gene 1 protein homolog (PSORS1C1) from Pan troglodytes (Chimpanzee).